The following is a 189-amino-acid chain: dTTP/UTP pyrophosphatase (189 aa).

D71 acts as the Proton acceptor in catalysis.

It belongs to the Maf family. YhdE subfamily. A divalent metal cation serves as cofactor.

It localises to the cytoplasm. It carries out the reaction dTTP + H2O = dTMP + diphosphate + H(+). It catalyses the reaction UTP + H2O = UMP + diphosphate + H(+). Its function is as follows. Nucleoside triphosphate pyrophosphatase that hydrolyzes dTTP and UTP. May have a dual role in cell division arrest and in preventing the incorporation of modified nucleotides into cellular nucleic acids. The chain is dTTP/UTP pyrophosphatase from Pseudoalteromonas translucida (strain TAC 125).